The chain runs to 310 residues: Protein RL1 (310 aa).

The segment covering Met-1–Thr-12 has biased composition (polar residues). The disordered stretch occupies residues Met-1–His-44. Basic and acidic residues predominate over residues Thr-35–His-44. The segment at Leu-153–Arg-159 is involved in the interaction with host DDB1. The tract at residues Glu-205 to Asp-252 is disordered. The segment covering Thr-238–Thr-248 has biased composition (low complexity).

Belongs to the HHV-5 HKLF1 family. As to quaternary structure, interacts with host adaptor protein DDB1; this interaction allows RL1 to recruit the cullin4-RING E3 ubiquitin ligase (CRL4) complex and promote SLN11 degradation.

Degrades the host antiviral factor SLFN11 via the cullin4-RING E3 ubiquitin ligase (CRL4) complex. The polypeptide is Protein RL1 (RL1) (Human cytomegalovirus (strain Merlin) (HHV-5)).